The sequence spans 113 residues: MGTTMLAEPRTLTKAELAELLFERVGLNKREAKDIVDTFFEEIRDALARGDSVKLSGFGNFQVRDKPPRPGRNPKTGETIPIAARRVVTFHASQKLKSVVEQPSSPPDPASAE.

Residues 59-80 (GNFQVRDKPPRPGRNPKTGETI) form a disordered region.

Belongs to the bacterial histone-like protein family. In terms of assembly, heterodimer of an alpha and a beta chain.

Functionally, this protein is one of the two subunits of integration host factor, a specific DNA-binding protein that functions in genetic recombination as well as in transcriptional and translational control. This Bordetella bronchiseptica (strain ATCC BAA-588 / NCTC 13252 / RB50) (Alcaligenes bronchisepticus) protein is Integration host factor subunit alpha.